A 1448-amino-acid polypeptide reads, in one-letter code: Sister chromatid cohesion protein PDS5 homolog B-A (1448 aa).

The HEAT repeat unit spans residues 383-419; that stretch reads LLVNDQLLNFVRERTLDKRWRVRKEAMMGLAQIYKKY. Residues 1141-1155 are compositionally biased toward polar residues; it reads AGKQMLSKSSRMETV. A disordered region spans residues 1141 to 1448; that stretch reads AGKQMLSKSS…TGRLRSAKKR (308 aa). Positions 1156 to 1168 are enriched in low complexity; sequence SNASSGSNPSSPG. The span at 1177–1186 shows a compositional bias: acidic residues; it reads MELDQSENED. Basic and acidic residues-rich tracts occupy residues 1196 to 1214, 1233 to 1243, and 1264 to 1273; these read KKSD…LEKP, ELSKPAQEPKS, and WQEKRLKEDL. Basic residues predominate over residues 1285-1294; sequence KKGRRGRPPK. Residues 1286-1298 constitute a DNA-binding region (a.T hook 1); it reads KGRRGRPPKSAKM. Acidic residues predominate over residues 1324–1341; it reads PTDEDDHLEISEEQDFEN. Residues 1346–1356 show a composition bias toward basic residues; the sequence is RKGRGSSRRTP. DNA-binding regions (a.T hook) lie at residues 1374-1386 and 1390-1402; these read QKRR…TPTV and KSHV…VVSK. Positions 1389–1399 are enriched in basic residues; that stretch reads KKSHVGRPRKV.

It belongs to the PDS5 family. As to quaternary structure, interacts with the cohesin complex. In terms of processing, phosphorylated in mitotic cells.

The protein resides in the nucleus. Its function is as follows. Plays a role in androgen-induced proliferative arrest. Required for maintenance of sister chromatid cohesion during mitosis. This is Sister chromatid cohesion protein PDS5 homolog B-A (pds5b-a) from Xenopus laevis (African clawed frog).